The primary structure comprises 170 residues: Adenine phosphoribosyltransferase (170 aa).

This sequence belongs to the purine/pyrimidine phosphoribosyltransferase family. In terms of assembly, homodimer.

The protein resides in the cytoplasm. The catalysed reaction is AMP + diphosphate = 5-phospho-alpha-D-ribose 1-diphosphate + adenine. The protein operates within purine metabolism; AMP biosynthesis via salvage pathway; AMP from adenine: step 1/1. In terms of biological role, catalyzes a salvage reaction resulting in the formation of AMP, that is energically less costly than de novo synthesis. This chain is Adenine phosphoribosyltransferase, found in Mesoplasma florum (strain ATCC 33453 / NBRC 100688 / NCTC 11704 / L1) (Acholeplasma florum).